We begin with the raw amino-acid sequence, 160 residues long: Anaerobic nitrite reductase MHB1 (160 aa).

One can recognise a Globin domain in the interval 8–157 (GFTEEQEALV…LVNAIKSEMK (150 aa)). Residues 41–45 (EIAPS) carry the Homodimerization motif. Heme b contacts are provided by Ser51, Lys65, His69, Lys99, and His104. The Homodimerization motif lies at 111-123 (DEHFEVTKFALLE).

It belongs to the plant globin family. Homodimer. Heme b is required as a cofactor. In terms of tissue distribution, root specific.

It localises to the nucleus matrix. Its subcellular location is the cytoplasm. It catalyses the reaction Fe(III)-heme b-[protein] + nitric oxide + H2O = Fe(II)-heme b-[protein] + nitrite + 2 H(+). Functionally, phytoglobin that reduces nitrite to nitric oxide (NO) under anoxic conditions (e.g. during flooding or in waterlogged soil) and upon root nodulation. Required for general plant development and during nodulation, especially for the onset of symbiosis. Monitors nitric oxide (NO) levels during early phase of the nitrogen-fixing symbiosis and buffers oxygen in functioning nodules. May not function as an oxygen storage or transport protein. Has an unusually high affinity for O(2) through a hexacoordinate heme iron because of a very low dissociation constant. In Medicago sativa (Alfalfa), this protein is Anaerobic nitrite reductase MHB1.